The following is a 319-amino-acid chain: Protein sprouty homolog 1 (319 aa).

Residue M1 is modified to N-acetylmethionine. Residues 54 to 157 form a disordered region; sequence TEGPSVVKRP…HRSERAIRTQ (104 aa). The segment covering 69 to 79 has biased composition (basic and acidic residues); it reads PRQEKHERTHE. Positions 112 to 131 are enriched in low complexity; the sequence is SRSTSTGSAASSGSNSSASS. Residues 183-295 enclose the SPR domain; sequence QCGKCKCGEC…CYDWIHRPGC (113 aa).

This sequence belongs to the sprouty family. In terms of assembly, forms heterodimers with SPRY2. Interacts with TESK1. Interacts with CAV1 (via C-terminus).

Its subcellular location is the cytoplasm. The protein resides in the membrane. Its function is as follows. Inhibits fibroblast growth factor (FGF)-induced retinal lens fiber differentiation, probably by inhibiting FGF-mediated phosphorylation of ERK1/2. Inhibits TGFB-induced epithelial-to-mesenchymal transition in lens epithelial cells. This Bos taurus (Bovine) protein is Protein sprouty homolog 1 (SPRY1).